The following is a 169-amino-acid chain: Ecotin (169 aa).

An N-terminal signal peptide occupies residues 1-21 (MKKCSIILASVLLATSINAIA). A disulfide bridge links cysteine 76 with cysteine 113.

This sequence belongs to the protease inhibitor I11 (ecotin) family. Homodimer.

The protein resides in the periplasm. Functionally, general inhibitor of pancreatic serine proteases: inhibits chymotrypsin, trypsin, elastases, factor X, kallikrein as well as a variety of other proteases. In Yersinia pseudotuberculosis serotype O:1b (strain IP 31758), this protein is Ecotin.